The sequence spans 325 residues: Elongation factor P--(R)-beta-lysine ligase (325 aa).

Residue 76–78 participates in substrate binding; that stretch reads SPE. ATP is bound by residues 100–102 and Asn109; that span reads RNE. Tyr118 provides a ligand contact to substrate. 244–245 lines the ATP pocket; the sequence is EL. Glu251 serves as a coordination point for substrate. Position 300 (Gly300) interacts with ATP.

The protein belongs to the class-II aminoacyl-tRNA synthetase family. EpmA subfamily. Homodimer.

It catalyses the reaction D-beta-lysine + L-lysyl-[protein] + ATP = N(6)-((3R)-3,6-diaminohexanoyl)-L-lysyl-[protein] + AMP + diphosphate + H(+). In terms of biological role, with EpmB is involved in the beta-lysylation step of the post-translational modification of translation elongation factor P (EF-P) on 'Lys-34'. Catalyzes the ATP-dependent activation of (R)-beta-lysine produced by EpmB, forming a lysyl-adenylate, from which the beta-lysyl moiety is then transferred to the epsilon-amino group of EF-P 'Lys-34'. The polypeptide is Elongation factor P--(R)-beta-lysine ligase (Salmonella agona (strain SL483)).